The chain runs to 424 residues: 3-phosphoshikimate 1-carboxyvinyltransferase (424 aa).

Residues lysine 21, serine 22, and arginine 26 each contribute to the 3-phosphoshikimate site. Residue lysine 21 coordinates phosphoenolpyruvate. Glycine 92 and arginine 120 together coordinate phosphoenolpyruvate. 3-phosphoshikimate is bound by residues serine 163, serine 164, glutamine 165, serine 191, aspartate 306, and lysine 333. Residue glutamine 165 participates in phosphoenolpyruvate binding. Aspartate 306 (proton acceptor) is an active-site residue. Phosphoenolpyruvate-binding residues include arginine 337, arginine 379, and lysine 405.

Belongs to the EPSP synthase family. As to quaternary structure, monomer.

The protein resides in the cytoplasm. It catalyses the reaction 3-phosphoshikimate + phosphoenolpyruvate = 5-O-(1-carboxyvinyl)-3-phosphoshikimate + phosphate. The protein operates within metabolic intermediate biosynthesis; chorismate biosynthesis; chorismate from D-erythrose 4-phosphate and phosphoenolpyruvate: step 6/7. Functionally, catalyzes the transfer of the enolpyruvyl moiety of phosphoenolpyruvate (PEP) to the 5-hydroxyl of shikimate-3-phosphate (S3P) to produce enolpyruvyl shikimate-3-phosphate and inorganic phosphate. This is 3-phosphoshikimate 1-carboxyvinyltransferase from Clostridium perfringens (strain SM101 / Type A).